The primary structure comprises 251 residues: Haloacid dehalogenase-like hydrolase domain-containing protein 3 (251 aa).

Lys-15 bears the N6-acetyllysine; alternate mark. The residue at position 15 (Lys-15) is an N6-succinyllysine; alternate. Lys-130 is modified (N6-acetyllysine).

Belongs to the HAD-like hydrolase superfamily.

This chain is Haloacid dehalogenase-like hydrolase domain-containing protein 3 (HDHD3), found in Bos taurus (Bovine).